We begin with the raw amino-acid sequence, 487 residues long: E3 ubiquitin-protein ligase RNF8 (487 aa).

The region spanning 38 to 92 is the FHA domain; the sequence is VTIGRGFSVTYQLISKVCPLMISRNHCVLKQNPEGQWTIMDNKSLNGVWLNRERL. The tract at residues 68 to 72 is required for interaction with PIWIL1; it reads QNPEG. The tract at residues 135–195 is disordered; sequence CLAPKNDHTT…PEKLHGKGEA (61 aa). At Ser157 the chain carries Phosphoserine. Residues 184-193 show a composition bias toward basic and acidic residues; the sequence is AEPEKLHGKG. Residues 405-443 form an RING-type zinc finger; the sequence is CIICSEYFIEAVTLNCAHSFCSFCISEWMKRKVECPICR.

The protein belongs to the RNF8 family. Homodimer. Forms a E2-E3 ubiquitin ligase complex composed of the RNF8 homodimer and a E2 heterodimer of UBE2N and UBE2V2. Interacts with class III E2s, including UBE2E1, UBE2E2, and UBE2E3 and with UBE2N. Interacts with RXRA. Interacts (via FHA domain) with phosphorylated HERC2 (via C-terminus). Interacts with PIWIL1; leading to sequester RNF8 in the cytoplasm. Interacts with WRAP53/TCAB1. Autoubiquitinated through 'Lys-48' and 'Lys-63' of ubiquitin. 'Lys-63' polyubiquitination is mediated by UBE2N. 'Lys-29'-type polyubiquitination is also observed, but it doesn't require its own functional RING-type zinc finger.

It is found in the nucleus. The protein localises to the cytoplasm. It localises to the midbody. The protein resides in the chromosome. Its subcellular location is the telomere. The enzyme catalyses S-ubiquitinyl-[E2 ubiquitin-conjugating enzyme]-L-cysteine + [acceptor protein]-L-lysine = [E2 ubiquitin-conjugating enzyme]-L-cysteine + N(6)-ubiquitinyl-[acceptor protein]-L-lysine.. Its pathway is protein modification; protein ubiquitination. Functionally, E3 ubiquitin-protein ligase that plays a key role in DNA damage signaling via 2 distinct roles: by mediating the 'Lys-63'-linked ubiquitination of histones H2A and H2AX and promoting the recruitment of DNA repair proteins at double-strand breaks (DSBs) sites, and by catalyzing 'Lys-48'-linked ubiquitination to remove target proteins from DNA damage sites. Following DNA DSBs, it is recruited to the sites of damage by ATM-phosphorylated MDC1 and catalyzes the 'Lys-63'-linked ubiquitination of histones H2A and H2AX, thereby promoting the formation of TP53BP1 and BRCA1 ionizing radiation-induced foci (IRIF). Also controls the recruitment of UIMC1-BRCC3 (RAP80-BRCC36) and PAXIP1/PTIP to DNA damage sites. Promotes the recruitment of NBN to DNA damage sites by catalyzing 'Lys-6'-linked ubiquitination of NBN. Also recruited at DNA interstrand cross-links (ICLs) sites and catalyzes 'Lys-63'-linked ubiquitination of histones H2A and H2AX, leading to recruitment of FAAP20 and Fanconi anemia (FA) complex, followed by interstrand cross-link repair. H2A ubiquitination also mediates the ATM-dependent transcriptional silencing at regions flanking DSBs in cis, a mechanism to avoid collision between transcription and repair intermediates. Promotes the formation of 'Lys-63'-linked polyubiquitin chains via interactions with the specific ubiquitin-conjugating UBE2N/UBC13 and ubiquitinates non-histone substrates such as PCNA. Substrates that are polyubiquitinated at 'Lys-63' are usually not targeted for degradation. Also catalyzes the formation of 'Lys-48'-linked polyubiquitin chains via interaction with the ubiquitin-conjugating UBE2L6/UBCH8, leading to degradation of substrate proteins such as CHEK2, JMJD2A/KDM4A and KU80/XRCC5: it is still unclear how the preference toward 'Lys-48'- versus 'Lys-63'-linked ubiquitination is regulated but it could be due to RNF8 ability to interact with specific E2 specific ligases. For instance, interaction with phosphorylated HERC2 promotes the association between RNF8 and UBE2N/UBC13 and favors the specific formation of 'Lys-63'-linked ubiquitin chains. Promotes non-homologous end joining (NHEJ) by promoting the 'Lys-48'-linked ubiquitination and degradation the of KU80/XRCC5. Following DNA damage, mediates the ubiquitination and degradation of JMJD2A/KDM4A in collaboration with RNF168, leading to unmask H4K20me2 mark and promote the recruitment of TP53BP1 at DNA damage sites. Following DNA damage, mediates the ubiquitination and degradation of POLD4/p12, a subunit of DNA polymerase delta. In the absence of POLD4, DNA polymerase delta complex exhibits higher proofreading activity. In addition to its function in damage signaling, also plays a role in higher-order chromatin structure by mediating extensive chromatin decondensation. Involved in the activation of ATM by promoting histone H2B ubiquitination, which indirectly triggers histone H4 'Lys-16' acetylation (H4K16ac), establishing a chromatin environment that promotes efficient activation of ATM kinase. Required in the testis, where it plays a role in the replacement of histones during spermatogenesis. At uncapped telomeres, promotes the joining of deprotected chromosome ends by inducing H2A ubiquitination and TP53BP1 recruitment, suggesting that it may enhance cancer development by aggravating telomere-induced genome instability in case of telomeric crisis. Promotes the assembly of RAD51 at DNA DSBs in the absence of BRCA1 and TP53BP1 Also involved in class switch recombination in immune system, via its role in regulation of DSBs repair. May be required for proper exit from mitosis after spindle checkpoint activation and may regulate cytokinesis. May play a role in the regulation of RXRA-mediated transcriptional activity. Not involved in RXRA ubiquitination by UBE2E2. This Rattus norvegicus (Rat) protein is E3 ubiquitin-protein ligase RNF8.